A 300-amino-acid polypeptide reads, in one-letter code: uncharacterized protein (300 aa).

Residue Y53 is the Proton donor of the active site. An NADP(+)-binding site is contributed by 210–220; that stretch reads SPLAGGKVFTE.

This sequence belongs to the aldo/keto reductase family. Aldo/keto reductase 2 subfamily.

This is an uncharacterized protein from Bacillus subtilis (strain 168).